The following is a 244-amino-acid chain: Phosphonates import ATP-binding protein PhnC 2 (244 aa).

Residues 3–242 enclose the ABC transporter domain; the sequence is LRVEGLKKVY…ELTDYTVDQL (240 aa). Residue 36 to 43 coordinates ATP; that stretch reads GPSGAGKS.

This sequence belongs to the ABC transporter superfamily. Phosphonates importer (TC 3.A.1.9.1) family. In terms of assembly, the complex is composed of two ATP-binding proteins (PhnC), two transmembrane proteins (PhnE) and a solute-binding protein (PhnD).

It is found in the cell membrane. It carries out the reaction phosphonate(out) + ATP + H2O = phosphonate(in) + ADP + phosphate + H(+). In terms of biological role, part of the ABC transporter complex PhnCDE involved in phosphonates import. Responsible for energy coupling to the transport system. In Halalkalibacterium halodurans (strain ATCC BAA-125 / DSM 18197 / FERM 7344 / JCM 9153 / C-125) (Bacillus halodurans), this protein is Phosphonates import ATP-binding protein PhnC 2.